Here is a 94-residue protein sequence, read N- to C-terminus: Large ribosomal subunit protein uL23 (94 aa).

It belongs to the universal ribosomal protein uL23 family. Part of the 50S ribosomal subunit. Contacts protein L29, and trigger factor when it is bound to the ribosome.

One of the early assembly proteins it binds 23S rRNA. One of the proteins that surrounds the polypeptide exit tunnel on the outside of the ribosome. Forms the main docking site for trigger factor binding to the ribosome. The polypeptide is Large ribosomal subunit protein uL23 (Listeria monocytogenes serotype 4b (strain CLIP80459)).